Reading from the N-terminus, the 582-residue chain is Fructose-1,6-bisphosphatase class 3 (582 aa).

The protein belongs to the FBPase class 3 family. The cofactor is Mn(2+).

It catalyses the reaction beta-D-fructose 1,6-bisphosphate + H2O = beta-D-fructose 6-phosphate + phosphate. Its pathway is carbohydrate biosynthesis; gluconeogenesis. The polypeptide is Fructose-1,6-bisphosphatase class 3 (Saccharophagus degradans (strain 2-40 / ATCC 43961 / DSM 17024)).